We begin with the raw amino-acid sequence, 443 residues long: Acid phosphatase type 7 (443 aa).

An N-terminal signal peptide occupies residues Met-1–Ala-23. 3 N-linked (GlcNAc...) asparagine glycosylation sites follow: Asn-53, Asn-76, and Asn-126. Fe cation-binding residues include Asp-140, Asp-169, and Tyr-172. Position 169 (Asp-169) interacts with Zn(2+). Asn-204 contributes to the Zn(2+) binding site. Residue Asn-210 is glycosylated (N-linked (GlcNAc...) asparagine). His-288 serves as a coordination point for Zn(2+). The N-linked (GlcNAc...) asparagine glycan is linked to Asn-313. A Zn(2+)-binding site is contributed by His-338. A Fe cation-binding site is contributed by His-340. Asn-355 and Asn-409 each carry an N-linked (GlcNAc...) asparagine glycan.

Belongs to the metallophosphoesterase superfamily. Purple acid phosphatase family. Fe cation is required as a cofactor. Zn(2+) serves as cofactor.

It is found in the secreted. The catalysed reaction is a phosphate monoester + H2O = an alcohol + phosphate. In Danio rerio (Zebrafish), this protein is Acid phosphatase type 7.